The sequence spans 417 residues: Probable metalloprotease arx1 (417 aa).

Belongs to the peptidase M24 family. In terms of assembly, component of the nucleoplasmic and cytoplasmic pre-60S ribosomal particles.

The protein localises to the cytoplasm. The protein resides in the nucleus. Probable metalloprotease involved in proper assembly of pre-ribosomal particles during the biogenesis of the 60S ribosomal subunit. Accompanies the pre-60S particles to the cytoplasm. This chain is Probable metalloprotease arx1 (arx1), found in Schizosaccharomyces pombe (strain 972 / ATCC 24843) (Fission yeast).